We begin with the raw amino-acid sequence, 151 residues long: Homeobox protein HD-1 (151 aa).

Residues 87–146 (ESIKSRRFPKFITEALERSFEIDQYPSEAEKARLAKICKLSTKQINNWFTNKRNRTKGHE) constitute a DNA-binding region (homeobox).

The protein localises to the nucleus. The sequence is that of Homeobox protein HD-1 (HD-1) from Encephalitozoon cuniculi (strain GB-M1) (Microsporidian parasite).